Reading from the N-terminus, the 376-residue chain is Glucose-1-phosphate adenylyltransferase (376 aa).

Alpha-D-glucose 1-phosphate contacts are provided by residues Tyr101, Gly166, 181-182 (EK), and Ser192.

This sequence belongs to the bacterial/plant glucose-1-phosphate adenylyltransferase family. Homotetramer.

It carries out the reaction alpha-D-glucose 1-phosphate + ATP + H(+) = ADP-alpha-D-glucose + diphosphate. Its pathway is glycan biosynthesis; glycogen biosynthesis. Its function is as follows. Involved in the biosynthesis of ADP-glucose, a building block required for the elongation reactions to produce glycogen. Catalyzes the reaction between ATP and alpha-D-glucose 1-phosphate (G1P) to produce pyrophosphate and ADP-Glc. In Bacillus cereus (strain Q1), this protein is Glucose-1-phosphate adenylyltransferase.